Here is an 823-residue protein sequence, read N- to C-terminus: ATP-dependent DNA helicase At3g02060, chloroplastic (823 aa).

Residues 1–53 (MMSLLPNPDPITVPLVLKLCSFPPPRRLFSLRLRRFTRKSSSLLPLVAVSSLS) constitute a chloroplast transit peptide. In terms of domain architecture, Helicase ATP-binding spans 285–447 (LTERETPMDR…LTGFRDASLI (163 aa)). 298-305 (GDVGFGKT) is a binding site for ATP. The DEEQ box signature appears at 400-403 (DEEQ). Positions 465–622 (RKEKVIEAIK…GFQLAEKDMG (158 aa)) constitute a Helicase C-terminal domain.

This sequence belongs to the helicase family.

It is found in the plastid. The protein resides in the chloroplast. The catalysed reaction is ATP + H2O = ADP + phosphate + H(+). This Arabidopsis thaliana (Mouse-ear cress) protein is ATP-dependent DNA helicase At3g02060, chloroplastic.